An 89-amino-acid polypeptide reads, in one-letter code: Cornifin-A (89 aa).

The tract at residues 1–29 is disordered; the sequence is MNSQQQKQPCTPPPQPQQQQVKQPCQPPP. Tandem repeats lie at residues 3–14, 18–29, 31–38, 39–46, 47–54, 55–62, 63–70, and 71–78. Positions 3 to 29 are 2 X 12 AA approximate repeats; it reads SQQQKQPCTPPPQPQQQQVKQPCQPPP. The tract at residues 31–78 is 6 X 8 AA approximate tandem repeats; sequence EPCIPKTKEPCHPKVPEPCHPKVPEPCQPKVPEPCQPKVPEPCPSTVT. The disordered stretch occupies residues 68-89; it reads KVPEPCPSTVTPAPAQQKTKQK. Residues 75–89 show a composition bias toward polar residues; the sequence is STVTPAPAQQKTKQK.

Belongs to the cornifin (SPRR) family.

Its subcellular location is the cytoplasm. Its function is as follows. Cross-linked envelope protein of keratinocytes. It is a keratinocyte protein that first appears in the cell cytosol, but ultimately becomes cross-linked to membrane proteins by transglutaminase. All that results in the formation of an insoluble envelope beneath the plasma membrane. In Homo sapiens (Human), this protein is Cornifin-A (SPRR1A).